We begin with the raw amino-acid sequence, 655 residues long: Polycyclic ketone monooxygenase (655 aa).

FAD-binding residues include Gly-89, Asp-113, Ala-114, Thr-121, Trp-124, Cys-132, Asp-133, Tyr-139, and Val-183. NADPH contacts are provided by Thr-277, Thr-280, Thr-301, Lys-425, and Val-452. Residues Cys-424 and Cys-596 are joined by a disulfide bond. Thr-492 and Asn-541 together coordinate FAD. Residue Tyr-600 coordinates NADPH.

It belongs to the FAD-binding monooxygenase family. It depends on FAD as a cofactor.

Functionally, polycyclic ketone monooxygenase (PockeMO) that displays excellent enantioselectivity, acts on various ketones, and is particularly active on polycyclic molecules. Breaks C-C bonds through the insertion of a single oxygen atom adjacent to a carbonyl moiety, yielding esters or lactones from ketones. PockeMO is able to convert linear ketones (including cyclohexane and to a lesser extend 4-octanone), cyclic ketones (including cyclohexanone and cyclooctanone), bicyclic ketones and polycyclic ketones (steroids). Performs oxidation of the keto functionalities at both the A and D rings of steroids. Particularly, oxidizes the A ring of stanolone or pregnenolone. Selectively oxidizes the D ring of androstenedione or androstadienedione, steroids with keto groups in both the A and D rings, to yield the pharmaceutically relevant testo(lo)lactone. This chain is Polycyclic ketone monooxygenase, found in Thermothelomyces thermophilus (strain ATCC 42464 / BCRC 31852 / DSM 1799) (Sporotrichum thermophile).